A 1057-amino-acid chain; its full sequence is Carbamoyl phosphate synthase large chain (1057 aa).

The segment at Met1–Glu401 is carboxyphosphate synthetic domain. The ATP site is built by Arg129, Arg169, Gly175, Gly176, Lys208, Ile210, Glu215, Gly241, Ile242, His243, Gln284, and Glu298. An ATP-grasp 1 domain is found at Arg133 to Val327. Residues Gln284, Glu298, and Asn300 each coordinate Mg(2+). Mn(2+) contacts are provided by Gln284, Glu298, and Asn300. Residues Tyr402 to Ser546 are oligomerization domain. The interval Ile547–Gly929 is carbamoyl phosphate synthetic domain. Residues Glu671–Ile861 form the ATP-grasp 2 domain. Residues Arg707, Arg746, Leu748, Glu752, Gly777, Val778, His779, Ser780, Gln820, and Glu832 each coordinate ATP. Positions 820, 832, and 834 each coordinate Mg(2+). Residues Gln820, Glu832, and Asn834 each contribute to the Mn(2+) site. Residues Val930–Met1057 form the MGS-like domain. Residues Val930 to Met1057 are allosteric domain.

It belongs to the CarB family. Composed of two chains; the small (or glutamine) chain promotes the hydrolysis of glutamine to ammonia, which is used by the large (or ammonia) chain to synthesize carbamoyl phosphate. Tetramer of heterodimers (alpha,beta)4. The cofactor is Mg(2+). Mn(2+) is required as a cofactor.

It carries out the reaction hydrogencarbonate + L-glutamine + 2 ATP + H2O = carbamoyl phosphate + L-glutamate + 2 ADP + phosphate + 2 H(+). It catalyses the reaction hydrogencarbonate + NH4(+) + 2 ATP = carbamoyl phosphate + 2 ADP + phosphate + 2 H(+). The protein operates within amino-acid biosynthesis; L-arginine biosynthesis; carbamoyl phosphate from bicarbonate: step 1/1. Its pathway is pyrimidine metabolism; UMP biosynthesis via de novo pathway; (S)-dihydroorotate from bicarbonate: step 1/3. Functionally, large subunit of the glutamine-dependent carbamoyl phosphate synthetase (CPSase). CPSase catalyzes the formation of carbamoyl phosphate from the ammonia moiety of glutamine, carbonate, and phosphate donated by ATP, constituting the first step of 2 biosynthetic pathways, one leading to arginine and/or urea and the other to pyrimidine nucleotides. The large subunit (synthetase) binds the substrates ammonia (free or transferred from glutamine from the small subunit), hydrogencarbonate and ATP and carries out an ATP-coupled ligase reaction, activating hydrogencarbonate by forming carboxy phosphate which reacts with ammonia to form carbamoyl phosphate. The polypeptide is Carbamoyl phosphate synthase large chain (Staphylococcus aureus (strain bovine RF122 / ET3-1)).